Consider the following 192-residue polypeptide: Elongation factor P (192 aa).

Belongs to the elongation factor P family.

The protein resides in the cytoplasm. Its pathway is protein biosynthesis; polypeptide chain elongation. Functionally, involved in peptide bond synthesis. Stimulates efficient translation and peptide-bond synthesis on native or reconstituted 70S ribosomes in vitro. Probably functions indirectly by altering the affinity of the ribosome for aminoacyl-tRNA, thus increasing their reactivity as acceptors for peptidyl transferase. This chain is Elongation factor P, found in Borreliella afzelii (strain PKo) (Borrelia afzelii).